Consider the following 91-residue polypeptide: Translation initiation factor IF-1 (91 aa).

The S1-like domain occupies M1 to K72. The disordered stretch occupies residues R70–R91.

Belongs to the IF-1 family. In terms of assembly, component of the 30S ribosomal translation pre-initiation complex which assembles on the 30S ribosome in the order IF-2 and IF-3, IF-1 and N-formylmethionyl-tRNA(fMet); mRNA recruitment can occur at any time during PIC assembly.

The protein resides in the cytoplasm. One of the essential components for the initiation of protein synthesis. Stabilizes the binding of IF-2 and IF-3 on the 30S subunit to which N-formylmethionyl-tRNA(fMet) subsequently binds. Helps modulate mRNA selection, yielding the 30S pre-initiation complex (PIC). Upon addition of the 50S ribosomal subunit IF-1, IF-2 and IF-3 are released leaving the mature 70S translation initiation complex. The protein is Translation initiation factor IF-1 of Azorhizobium caulinodans (strain ATCC 43989 / DSM 5975 / JCM 20966 / LMG 6465 / NBRC 14845 / NCIMB 13405 / ORS 571).